The chain runs to 454 residues: tRNA modification GTPase MnmE (454 aa).

Arginine 23, glutamate 80, and lysine 120 together coordinate (6S)-5-formyl-5,6,7,8-tetrahydrofolate. The TrmE-type G domain maps to 216–377 (GMKVVIAGRP…LRNHLKQSMG (162 aa)). Residue asparagine 226 coordinates K(+). Residues 226–231 (NAGKSS), 245–251 (TDIAGTT), 270–273 (DTAG), 335–338 (NKAD), and 358–360 (SAR) contribute to the GTP site. Serine 230 lines the Mg(2+) pocket. Threonine 245, isoleucine 247, and threonine 250 together coordinate K(+). Residue threonine 251 coordinates Mg(2+). Lysine 454 contacts (6S)-5-formyl-5,6,7,8-tetrahydrofolate.

It belongs to the TRAFAC class TrmE-Era-EngA-EngB-Septin-like GTPase superfamily. TrmE GTPase family. In terms of assembly, homodimer. Heterotetramer of two MnmE and two MnmG subunits. The cofactor is K(+).

The protein localises to the cytoplasm. Functionally, exhibits a very high intrinsic GTPase hydrolysis rate. Involved in the addition of a carboxymethylaminomethyl (cmnm) group at the wobble position (U34) of certain tRNAs, forming tRNA-cmnm(5)s(2)U34. The protein is tRNA modification GTPase MnmE of Salmonella typhi.